We begin with the raw amino-acid sequence, 264 residues long: Na(+)-translocating NADH-quinone reductase subunit E (264 aa).

6 consecutive transmembrane segments (helical) span residues Val-11 to Gly-31, Met-50 to Ile-70, Phe-90 to Leu-110, Gly-123 to Ile-143, Phe-149 to Leu-169, and Met-189 to Ile-209.

It belongs to the NqrDE/RnfAE family. As to quaternary structure, composed of six subunits; NqrA, NqrB, NqrC, NqrD, NqrE and NqrF.

The protein resides in the cell inner membrane. The enzyme catalyses a ubiquinone + n Na(+)(in) + NADH + H(+) = a ubiquinol + n Na(+)(out) + NAD(+). Functionally, NQR complex catalyzes the reduction of ubiquinone-1 to ubiquinol by two successive reactions, coupled with the transport of Na(+) ions from the cytoplasm to the periplasm. NqrA to NqrE are probably involved in the second step, the conversion of ubisemiquinone to ubiquinol. In Chlamydia caviae (strain ATCC VR-813 / DSM 19441 / 03DC25 / GPIC) (Chlamydophila caviae), this protein is Na(+)-translocating NADH-quinone reductase subunit E.